A 103-amino-acid chain; its full sequence is Pyrimidine/purine nucleoside phosphorylase (103 aa).

The protein belongs to the nucleoside phosphorylase PpnP family.

It catalyses the reaction a purine D-ribonucleoside + phosphate = a purine nucleobase + alpha-D-ribose 1-phosphate. The catalysed reaction is adenosine + phosphate = alpha-D-ribose 1-phosphate + adenine. It carries out the reaction cytidine + phosphate = cytosine + alpha-D-ribose 1-phosphate. The enzyme catalyses guanosine + phosphate = alpha-D-ribose 1-phosphate + guanine. It catalyses the reaction inosine + phosphate = alpha-D-ribose 1-phosphate + hypoxanthine. The catalysed reaction is thymidine + phosphate = 2-deoxy-alpha-D-ribose 1-phosphate + thymine. It carries out the reaction uridine + phosphate = alpha-D-ribose 1-phosphate + uracil. The enzyme catalyses xanthosine + phosphate = alpha-D-ribose 1-phosphate + xanthine. Functionally, catalyzes the phosphorolysis of diverse nucleosides, yielding D-ribose 1-phosphate and the respective free bases. Can use uridine, adenosine, guanosine, cytidine, thymidine, inosine and xanthosine as substrates. Also catalyzes the reverse reactions. The protein is Pyrimidine/purine nucleoside phosphorylase of Sulfurimonas denitrificans (strain ATCC 33889 / DSM 1251) (Thiomicrospira denitrificans (strain ATCC 33889 / DSM 1251)).